The primary structure comprises 505 residues: Peroxisome proliferator-activated receptor gamma (505 aa).

T84 carries O-linked (GlcNAc) threonine glycosylation. Residue S112 is modified to Phosphoserine; by MAPK. Residues 136–210 (AIECRVCGDK…VGMSHNAIRF (75 aa)) constitute a DNA-binding region (nuclear receptor). 2 consecutive NR C4-type zinc fingers follow at residues 139–159 (CRVC…CEGC) and 176–198 (CDLN…FQKC). Residues 205 to 280 (HNAIRFGRMP…DKSPFVIYDM (76 aa)) form an interaction with FAM120B region. The region spanning 238 to 503 (DLRALAKHLY…HPLLQEIYKD (266 aa)) is the NR LBD domain. K252 is covalently cross-linked (Glycyl lysine isopeptide (Lys-Gly) (interchain with G-Cter in ubiquitin)). The short motif at 495–503 (PLLQEIYKD) is the 9aaTAD element.

Belongs to the nuclear hormone receptor family. NR1 subfamily. Interacts with FOXO1 (acetylated form). Heterodimer with other nuclear receptors, such as RXRA. The heterodimer with the retinoic acid receptor RXRA is called adipocyte-specific transcription factor ARF6. Interacts with NCOA6 coactivator, leading to a strong increase in transcription of target genes. Interacts with coactivator PPARBP, leading to a mild increase in transcription of target genes. Interacts with NOCA7 in a ligand-inducible manner. Interacts with NCOA1 and NCOA2 LXXLL motifs. Interacts with ASXL1, ASXL2, DNTTIP2, FAM120B, MAP2K1/MEK1, NR0B2, PDPK1, PRDM16, PRMT2 and TGFB1I1. Interacts (when activated by agonist) with PPP5C. Interacts with HELZ2 and THRAP3; the interaction stimulates the transcriptional activity of PPARG. Interacts with PER2, the interaction is ligand dependent and blocks PPARG recruitment to target promoters. Interacts with NOCT. Interacts with ACTN4. Interacts (when in the liganded conformation) with GPS2. Interacts with CRY1 and CRY2 in a ligand-dependent manner. In the absence of hormonal ligand, interacts with TACC1. In macrophages, interacts with PAQR3 and STUB1; the interactions promote PPARG poylubiquitination and STUB1-mediated degradation. In terms of processing, O-GlcNAcylation at Thr-84 reduces transcriptional activity in adipocytes. Phosphorylated at basal conditions and dephosphorylated when treated with the ligand. May be dephosphorylated by PPP5C. The phosphorylated form may be inactive and dephosphorylation induces adipogenic activity. Post-translationally, ubiquitinated by E3 ubiquitin-protein ligase complex containing FBXO9; leading to proteasomal degradation. Ubiquitinated at Lys-252 by TRIM55 leading to proteasomal degradation. Ubiquitinated by E3 ubiquitin-protein ligase STUB1/CHIP; leading to proteasomal degradation. Highest expression in adipose tissue. Lower in liver, heart, kidney, stomach, duodenum and colon.

The protein resides in the nucleus. The protein localises to the cytoplasm. PDPK1 activates its transcriptional activity independently of its kinase activity. Its function is as follows. Nuclear receptor that binds peroxisome proliferators such as hypolipidemic drugs and fatty acids. Once activated by a ligand, the nuclear receptor binds to DNA specific PPAR response elements (PPRE) and modulates the transcription of its target genes, such as acyl-CoA oxidase. It therefore controls the peroxisomal beta-oxidation pathway of fatty acids. Key regulator of adipocyte differentiation and glucose homeostasis. ARF6 acts as a key regulator of the tissue-specific adipocyte P2 (aP2) enhancer. Acts as a critical regulator of gut homeostasis by suppressing NF-kappa-B-mediated pro-inflammatory responses. Plays a role in the regulation of cardiovascular circadian rhythms by regulating the transcription of BMAL1 in the blood vessels. The sequence is that of Peroxisome proliferator-activated receptor gamma (PPARG) from Macaca mulatta (Rhesus macaque).